Consider the following 447-residue polypeptide: MLHRYLPMTEEDKKEMLQTIGVQTIDELFSDIPESVRFKGDLKIKEAKSEPELLKELSQMASKNANLKEYASFLGAGVYDHYAPVIVDHVISRSEFYTAYTPYQPEISQGELQAIFEFQTMICELTGMDVANSSMYDGGTALAEAAMLAAGHTRKKKILVSSAVHPESRAVLETYAKGQHLEVVEINHKDGVTDLDVLQSEVDDTVACVIVQYPNFFGQVEKLADIEKIVHQQKSLFIVSSNPLSLGALTPPGKFGADIVIGDAQPFGIPTQFGGPHCGYFATTKAFMRKIPGRLVGQTVDSDGKRGFVLTLQAREQHIRRDKATSNICSNQALNALAASVAMTALGKQGVKEMARQNISKAQYAKRQFEAKGFTVTFAGPFFNEFVVDCKRPVKEVNDALLQKNIIGGYDLGRDYKEHENHMLVAVTELRTKDEIDTLVNEMGAIQ.

This sequence belongs to the GcvP family. N-terminal subunit subfamily. The glycine cleavage system is composed of four proteins: P, T, L and H. In this organism, the P 'protein' is a heterodimer of two subunits.

It carries out the reaction N(6)-[(R)-lipoyl]-L-lysyl-[glycine-cleavage complex H protein] + glycine + H(+) = N(6)-[(R)-S(8)-aminomethyldihydrolipoyl]-L-lysyl-[glycine-cleavage complex H protein] + CO2. Its function is as follows. The glycine cleavage system catalyzes the degradation of glycine. The P protein binds the alpha-amino group of glycine through its pyridoxal phosphate cofactor; CO(2) is released and the remaining methylamine moiety is then transferred to the lipoamide cofactor of the H protein. The polypeptide is Probable glycine dehydrogenase (decarboxylating) subunit 1 (Bacillus cereus (strain AH187)).